Consider the following 213-residue polypeptide: A-type ATP synthase subunit D (213 aa).

It belongs to the V-ATPase D subunit family. Has multiple subunits with at least A(3), B(3), C, D, E, F, H, I and proteolipid K(x).

The protein localises to the cell membrane. In terms of biological role, component of the A-type ATP synthase that produces ATP from ADP in the presence of a proton gradient across the membrane. The sequence is that of A-type ATP synthase subunit D from Saccharolobus islandicus (strain L.S.2.15 / Lassen #1) (Sulfolobus islandicus).